The primary structure comprises 398 residues: MGVLSAADPPPVSAIGFEGYEKRLEITFSEAPVFADPDGRGLRALSRAQIDSVLDLARCTIVSELSNKDFDSYVLSESSLFIYSDKIVIKTCGTTKLLLTIPRILELAEGLSMPLAAVKYSRGMFIFPSAQPAPHRSFSEEVAVLNRYFGHLKSGGNAYVIGDPAKPGQKWHIYYATQHPEQPMVTLEMCMTGLDKEKASVFFKTSADGHTSCAKEMTKLSGISDIIPEMEICDFDFEPCGYSMNAIHGLAFSTIHVTPEDGFSYASYEVVGFDASTLAYGDLVKRVLRCFGPSEFSVAVTIFGGHGHAGTWAKELNADAYKCNNMVEQELPCGGLLIYQSFDATEDVPVAVGSPKSVLHCFEAENMVNPAPVKEGKLGNLLPWGEDALEENDGVFDE.

Residues Glu-18 and Glu-21 contribute to the active site. The Schiff-base intermediate with substrate; via pyruvic acid role is filled by Ser-78. The residue at position 78 (Ser-78) is a Pyruvic acid (Ser); by autocatalysis. Catalysis depends on Cys-92, which acts as the Proton donor; for catalytic activity. Residues Ser-243 and His-256 each act as proton acceptor; for processing activity in the active site.

This sequence belongs to the eukaryotic AdoMetDC family. The cofactor is pyruvate. Is synthesized initially as an inactive proenzyme. Formation of the active enzyme involves a self-maturation process in which the active site pyruvoyl group is generated from an internal serine residue via an autocatalytic post-translational modification. Two non-identical subunits are generated from the proenzyme in this reaction, and the pyruvate is formed at the N-terminus of the alpha chain, which is derived from the carboxyl end of the proenzyme. The post-translation cleavage follows an unusual pathway, termed non-hydrolytic serinolysis, in which the side chain hydroxyl group of the serine supplies its oxygen atom to form the C-terminus of the beta chain, while the remainder of the serine residue undergoes an oxidative deamination to produce ammonia and the pyruvoyl group blocking the N-terminus of the alpha chain.

The enzyme catalyses S-adenosyl-L-methionine + H(+) = S-adenosyl 3-(methylsulfanyl)propylamine + CO2. It functions in the pathway amine and polyamine biosynthesis; S-adenosylmethioninamine biosynthesis; S-adenosylmethioninamine from S-adenosyl-L-methionine: step 1/1. This is S-adenosylmethionine decarboxylase proenzyme (SAMDC) from Oryza sativa subsp. indica (Rice).